The chain runs to 240 residues: Orotidine 5'-phosphate decarboxylase (240 aa).

Substrate-binding positions include aspartate 16, lysine 37, 64-73 (DLKFHDIPTT), threonine 128, arginine 190, glutamine 199, glycine 219, and arginine 220. Lysine 66 acts as the Proton donor in catalysis.

It belongs to the OMP decarboxylase family. Type 1 subfamily. Homodimer.

The enzyme catalyses orotidine 5'-phosphate + H(+) = UMP + CO2. It functions in the pathway pyrimidine metabolism; UMP biosynthesis via de novo pathway; UMP from orotate: step 2/2. Functionally, catalyzes the decarboxylation of orotidine 5'-monophosphate (OMP) to uridine 5'-monophosphate (UMP). This is Orotidine 5'-phosphate decarboxylase from Prochlorococcus marinus (strain SARG / CCMP1375 / SS120).